The chain runs to 24 residues: Myotoxin TmC4-47.2 (24 aa).

The tract at residues 1–24 is disordered; it reads KASSSAPKGWTHHGSRFTFHRGSM. Residues 10–24 show a composition bias toward basic residues; that stretch reads WTHHGSRFTFHRGSM. Residues 13 to 24 enclose the C-type lectin domain; the sequence is HGSRFTFHRGSM.

Expressed by the venom gland.

The protein localises to the secreted. Its function is as follows. Able to depolarize frog skeletal muscle fibers, but has no effects on squid giant axons. Tetrodotoxin is able to partially antagonize the depolarization. Induces myonecrosis. The protein is Myotoxin TmC4-47.2 of Thalassophryne maculosa (Cano toadfish).